The sequence spans 159 residues: MQSKEDFIEMRVPASAEYVSLIRLTLSGVFSRAGATYDDIEDAKIAVSEAVTNAVKHAYKENNNVGIINIYFEILEDKIKIVISDKGDSFDYETTKSKIGPYDKDENIDFLREGGLGLFLIESLMDEVTVYKESGVTISMTKYIKKEQVRNNGERVEIS.

Belongs to the anti-sigma-factor family.

It carries out the reaction L-seryl-[protein] + ATP = O-phospho-L-seryl-[protein] + ADP + H(+). The catalysed reaction is L-threonyl-[protein] + ATP = O-phospho-L-threonyl-[protein] + ADP + H(+). Negative regulator of sigma-B activity. Phosphorylates and inactivates its specific antagonist protein, RsbV. Upon phosphorylation of RsbV, RsbW is released and binds to sigma-B, thereby blocking its ability to form an RNA polymerase holoenzyme (E-sigma-B). The chain is Serine-protein kinase RsbW from Staphylococcus aureus (strain Newman).